A 544-amino-acid polypeptide reads, in one-letter code: Chaperonin GroEL 1 (544 aa).

Residues 30–33, 87–91, Gly-415, 480–482, and Asp-496 each bind ATP; these read TLGP, DGTTT, and NAA.

Belongs to the chaperonin (HSP60) family. Forms a cylinder of 14 subunits composed of two heptameric rings stacked back-to-back. Interacts with the co-chaperonin GroES.

The protein resides in the cytoplasm. It catalyses the reaction ATP + H2O + a folded polypeptide = ADP + phosphate + an unfolded polypeptide.. Together with its co-chaperonin GroES, plays an essential role in assisting protein folding. The GroEL-GroES system forms a nano-cage that allows encapsulation of the non-native substrate proteins and provides a physical environment optimized to promote and accelerate protein folding. The protein is Chaperonin GroEL 1 of Polaromonas naphthalenivorans (strain CJ2).